A 306-amino-acid polypeptide reads, in one-letter code: Pantothenate kinase (306 aa).

Residue 91 to 98 (GSVAVGKS) participates in ATP binding.

Belongs to the prokaryotic pantothenate kinase family.

The protein resides in the cytoplasm. The catalysed reaction is (R)-pantothenate + ATP = (R)-4'-phosphopantothenate + ADP + H(+). It participates in cofactor biosynthesis; coenzyme A biosynthesis; CoA from (R)-pantothenate: step 1/5. The protein is Pantothenate kinase of Streptococcus mutans serotype c (strain ATCC 700610 / UA159).